The primary structure comprises 182 residues: ATP-dependent protease subunit HslV (182 aa).

Thr-12 is a catalytic residue. Residues Ala-167, Cys-170, and Thr-173 each contribute to the Na(+) site.

This sequence belongs to the peptidase T1B family. HslV subfamily. In terms of assembly, a double ring-shaped homohexamer of HslV is capped on each side by a ring-shaped HslU homohexamer. The assembly of the HslU/HslV complex is dependent on binding of ATP.

It is found in the cytoplasm. It carries out the reaction ATP-dependent cleavage of peptide bonds with broad specificity.. With respect to regulation, allosterically activated by HslU binding. In terms of biological role, protease subunit of a proteasome-like degradation complex believed to be a general protein degrading machinery. In Chlorobium phaeobacteroides (strain BS1), this protein is ATP-dependent protease subunit HslV.